The following is an 84-amino-acid chain: MKIIFLVLMMILSEVYSDRDGYPVHDGTNCKYSCDIREKWEYCTPLCKRRNAKTGYCYAFACWCIGLPDEVKVYGDDGIFCKSG.

A signal peptide spans 1–17 (MKIIFLVLMMILSEVYS). The region spanning 19–82 (RDGYPVHDGT…VYGDDGIFCK (64 aa)) is the LCN-type CS-alpha/beta domain. 4 cysteine pairs are disulfide-bonded: Cys30–Cys81, Cys34–Cys57, Cys43–Cys62, and Cys47–Cys64. Residue Ser83 is modified to Serine amide.

It belongs to the long (4 C-C) scorpion toxin superfamily. Sodium channel inhibitor family. Beta subfamily. As to expression, expressed by the venom gland.

It is found in the secreted. Functionally, toxin with unknown target. In vivo, induces severe neurotoxic events in mice such as excitability and convulsions, leading to the death of the animals within a few minutes after injection. Exerts very strong cytotoxic effect on a mouse brain tumor cell line (BC3H1) (IC(50)=5 mg/ml). It exerts its effects by inducing a stronger necrosis than apoptosis in BC3H1 cells. This chain is Toxin Acra3, found in Androctonus crassicauda (Arabian fat-tailed scorpion).